A 155-amino-acid polypeptide reads, in one-letter code: 6,7-dimethyl-8-ribityllumazine synthase (155 aa).

5-amino-6-(D-ribitylamino)uracil-binding positions include F23, 57–59, and 81–83; these read AFE and AVI. 86–87 contributes to the (2S)-2-hydroxy-3-oxobutyl phosphate binding site; that stretch reads ST. H89 (proton donor) is an active-site residue. A 5-amino-6-(D-ribitylamino)uracil-binding site is contributed by F114. A (2S)-2-hydroxy-3-oxobutyl phosphate-binding site is contributed by R128.

The protein belongs to the DMRL synthase family.

The catalysed reaction is (2S)-2-hydroxy-3-oxobutyl phosphate + 5-amino-6-(D-ribitylamino)uracil = 6,7-dimethyl-8-(1-D-ribityl)lumazine + phosphate + 2 H2O + H(+). It functions in the pathway cofactor biosynthesis; riboflavin biosynthesis; riboflavin from 2-hydroxy-3-oxobutyl phosphate and 5-amino-6-(D-ribitylamino)uracil: step 1/2. Its function is as follows. Catalyzes the formation of 6,7-dimethyl-8-ribityllumazine by condensation of 5-amino-6-(D-ribitylamino)uracil with 3,4-dihydroxy-2-butanone 4-phosphate. This is the penultimate step in the biosynthesis of riboflavin. The sequence is that of 6,7-dimethyl-8-ribityllumazine synthase from Citrifermentans bemidjiense (strain ATCC BAA-1014 / DSM 16622 / JCM 12645 / Bem) (Geobacter bemidjiensis).